A 75-amino-acid polypeptide reads, in one-letter code: Probable [Fe-S]-dependent transcriptional repressor (75 aa).

The iron-sulfur cluster site is built by Cys55, Cys60, Cys63, and Cys72.

This sequence belongs to the FeoC family.

Its function is as follows. May function as a transcriptional regulator that controls feoABC expression. The protein is Probable [Fe-S]-dependent transcriptional repressor of Serratia marcescens.